Here is a 642-residue protein sequence, read N- to C-terminus: MPIITLPDGSQRQFDNPVSVLEVAQSIGSGLAKATIAGRVNGERRDASDMISEDANLEIITAKDEDGLEIIRHSTAHLLGHAIKQLFPNVKMAIGPTIDNGFYYDIDLDRSLTQEDIDTLEKRMLELAKTNYDVIKKRVSWQEARDTFESRAEPYKIAILDENIAKDDQPALYHHEEYIDMCRGPHVPNMRFCHHFKLMKVAGAYWRGNSDNKMLQRIYGTAWADKKQLADYLHRLEEAAKRDHRKIGKALNLYHMQEEAPGMVFWHNDGWTIFRELETFVRTKLKEYDYQEVKGPFMMDRVLWERTGHWQNYADLMFTTQSENREYAIKPMNCPGHVQIFNQGLKSYRDLPIRMAEFGSCHRNEPSGSLHGLMRVRGFTQDDAHIFCTEDQIESEVTSCIKMVYDIYSTFGFTDIFVKLSTRPEKRIGEDVMWDRAEQGLANALKHNGLEYEIQEGEGAFYGPKIEFALRDCLDREWQCGTIQLDFALPGRLDATYVAEDNARRTPVMIHRAILGSIERFIGIITEEYAGFFPAWLAPIQAVVMNITDSQADYVQKVVKQFSEAGLRVKADIRNEKVGFKIREHTLRRVPYMLVCGDKEIVENKIAVRTRKGTDLGTFSVEEFVEILKQQVRKRELTLLGE.

The TGS domain maps to 1–61 (MPIITLPDGS…SEDANLEIIT (61 aa)). The tract at residues 243 to 534 (DHRKIGKALN…ITEEYAGFFP (292 aa)) is catalytic. Residues Cys-334, His-385, and His-511 each coordinate Zn(2+).

It belongs to the class-II aminoacyl-tRNA synthetase family. Homodimer. Zn(2+) serves as cofactor.

It localises to the cytoplasm. The enzyme catalyses tRNA(Thr) + L-threonine + ATP = L-threonyl-tRNA(Thr) + AMP + diphosphate + H(+). In terms of biological role, catalyzes the attachment of threonine to tRNA(Thr) in a two-step reaction: L-threonine is first activated by ATP to form Thr-AMP and then transferred to the acceptor end of tRNA(Thr). Also edits incorrectly charged L-seryl-tRNA(Thr). The sequence is that of Threonine--tRNA ligase from Histophilus somni (strain 2336) (Haemophilus somnus).